A 713-amino-acid polypeptide reads, in one-letter code: Protein argonaute (713 aa).

The segment at 18–129 (EFIPKEVHFY…IKNIRKHKVV (112 aa)) is N-terminal domain. Residues 164–257 (HLWDFVNRDK…FAPQFCNLVF (94 aa)) form the PAZ domain. Residues 213-218 (HIIKYY) are binds 3'-end of gDNA. The mid domain stretch occupies residues 346–488 (DVPEIIRNKN…QIMGKLGIKY (143 aa)). Residues 426 to 699 (CFALIIGKEK…FVKALGKNWK (274 aa)) form the Piwi domain. Residues Q457, Q479, and K483 each contribute to the a divalent metal cation site. Positions 457–460 (QNIL) are binds 5'-phosphorylated end of gDNA. Residues D504, E541, and D570 contribute to the active site. A Mn(2+)-binding site is contributed by D504. D570 is a binding site for Mn(2+). Binds 5'-phosphorylated end of gDNA stretches follow at residues 625-632 (HKTPFGSN) and 678-679 (LR). Residue D688 is part of the active site. D688 and I713 together coordinate Mn(2+).

Belongs to the argonaute family. Long pAgo subfamily. It depends on a divalent metal cation as a cofactor.

Its activity is regulated as follows. DNA cleavage is inhibited by EDTA. Its function is as follows. A DNA-guided ssDNA endonuclease that may play a role in defense against invading genetic elements. Uses short ssDNA sequences as guides (gDNA) to bind complementary target strands, resulting in slicing of the target DNA (tDNA). Endonucleolytically cleaves tDNA (the gDNA indicates where to cleave); two major and two minor products are seen which correspond to cleavage sites between nucleotides 9/10, 10/11, 13/14, and 14/15 downstream of the target residue base-paired with the 5'-end of the gDNA. Efficient guide-dependent tDNA cleavage requires a minimal length of 15 bp and is maximal at 19 bp. Prefers gDNA with 5'-phosphorylated purines and 3'-pyrimidines; changing these bases alters the cleavage activity and patterns. Also has guide-independent activity on tDNA called 'chopping'. Probably a first round of guide-independent activity on an invading plasmid or virus would generate guide DNAs for subsequent, more efficient, guide-dependent degradation of invading nucleic acids. Has no activity on substrate with a mismatch at positions 10 and 11, on ssDNA or RNA, nor on DNA:RNA hybrids. Digests longer (750 bp) dsDNA as well as circular plasmid and naked genomic DNA, but not chromatin, in a guide DNA-independent manner. Addition of endogenous histone A3 protects DNA from cleavage, while cleavage is insensitive to methylation. When plasmid encoding active or mutated protein (Ala-541) is transformed into Sulfolobus acidocaldarius about 25-fold fewer transformants are found with active protein; reduced levels of plasmid are found in wild-type transformed cells. While S.acidocaldarius grows at a similar temperature to M.jannaschii (70 to 80 degrees Celsius) it has very different histone-like proteins, which presumably do not protect against MjAgo. Binds ssDNA, dsDNA and DNA-RNA hybrids; binding is most efficient with dsDNA. The protein is Protein argonaute of Methanocaldococcus jannaschii (strain ATCC 43067 / DSM 2661 / JAL-1 / JCM 10045 / NBRC 100440) (Methanococcus jannaschii).